We begin with the raw amino-acid sequence, 483 residues long: MKNVQTLKNYIGGQWIESTSKQVEDVPNPATGEIIARVPLSTKEDLDRAVATAKEAFKTWRKVAVPRRARILFRYQQLLIENWEGLAKLVTLENGKSYKEAYGEVQRGIECVEFAAGAPTLMMGEQLPDIATGVESGMYRYPIGVIAGITPFNFPMMVPCWMFPLAIACGNTFVLKPSERTPLLANRIAELFKEAGLPDGVLNIVHGAHDVVNGILDNEDVKAVSFVGSQPVAEYIYKTAAANGKRVQALAGAKNHSIVLKDADLSSTVKEITSAAFGSAGERCMAAAVVVVEEDVADELVNRLLQEANAITIGNGLEEGVFLGPVIREGHKERTLGYIQSGVEQGATLIRDGREDDIANSQGYFVGPTIFDNVTQEMKIWQDEIFAPVLSIVRVKDLMEAIHVANASPFANGACLYTNSAKAIREFREEIDAGMLGVNLGVPAPMAFFPFSGYKKSFYGDLHANGKDGVEFYTRKKMLTARY.

NAD(+) is bound by residues Phe-152, Lys-176, Glu-179, Arg-180, and Ser-229. The Nucleophile role is filled by Cys-284. Glu-384 contributes to the NAD(+) binding site.

The protein belongs to the aldehyde dehydrogenase family. IolA subfamily. As to quaternary structure, homotetramer.

The catalysed reaction is 3-oxopropanoate + NAD(+) + CoA + H2O = hydrogencarbonate + acetyl-CoA + NADH + H(+). It carries out the reaction 2-methyl-3-oxopropanoate + NAD(+) + CoA + H2O = propanoyl-CoA + hydrogencarbonate + NADH + H(+). It functions in the pathway polyol metabolism; myo-inositol degradation into acetyl-CoA; acetyl-CoA from myo-inositol: step 7/7. Catalyzes the oxidation of malonate semialdehyde (MSA) and methylmalonate semialdehyde (MMSA) into acetyl-CoA and propanoyl-CoA, respectively. Is involved in a myo-inositol catabolic pathway. Bicarbonate, and not CO2, is the end-product of the enzymatic reaction. The chain is Malonate-semialdehyde dehydrogenase 2 from Bacillus mycoides (strain KBAB4) (Bacillus weihenstephanensis).